The sequence spans 523 residues: WD repeat-containing protein WDS homolog (523 aa).

Residues 16 to 48 (KKHEFIRILVQCLYSLGFKNSASCLEFESKILY) form the LisH domain. In terms of domain architecture, CTLH spans 49 to 107 (KTADSEFLEKQVLSGNWDSCVQVLDRIFDNSMDDTRNTALYLVFKQCLLEYLKRGDVSL). WD repeat units lie at residues 222-261 (AHKN…KVEL), 267-306 (SHQN…LRHT), 310-353 (NNTG…KAWR), 355-394 (TRIP…ERVI), 395-434 (SEEQ…KQPL), 438-480 (GHRQ…PLEV), and 483-523 (GHSM…KPLN).

In terms of assembly, interacts with RANBPM.

It is found in the cytoplasm. This is WD repeat-containing protein WDS homolog from Arabidopsis thaliana (Mouse-ear cress).